The following is a 140-amino-acid chain: Ergosterol biosynthetic protein 28 homolog (140 aa).

A run of 4 helical transmembrane segments spans residues 4–24, 52–72, 79–99, and 105–125; these read FLNV…GNTL, TFGI…IDIH, ITLW…FVFG, and VGVL…LVGL.

It belongs to the ERG28 family.

The protein resides in the endoplasmic reticulum membrane. This is Ergosterol biosynthetic protein 28 homolog from Mus musculus (Mouse).